A 34-amino-acid chain; its full sequence is Turripeptide OL127 (34 aa).

Contains 4 disulfide bonds. Expressed by the venom duct.

The protein resides in the secreted. Acts as a neurotoxin by inhibiting an ion channel. This Iotyrris olangoensis (Sea snail) protein is Turripeptide OL127.